The primary structure comprises 287 residues: tRNA pseudouridine synthase B (287 aa).

The Nucleophile role is filled by D38.

The protein belongs to the pseudouridine synthase TruB family. Type 1 subfamily.

The catalysed reaction is uridine(55) in tRNA = pseudouridine(55) in tRNA. Responsible for synthesis of pseudouridine from uracil-55 in the psi GC loop of transfer RNAs. This is tRNA pseudouridine synthase B from Aquifex aeolicus (strain VF5).